A 214-amino-acid chain; its full sequence is Outer-membrane lipoprotein LolB (214 aa).

An N-terminal signal peptide occupies residues 1–25; sequence MNNLKRFTKSIFSCIALSGLLFLGG. Residue cysteine 26 is the site of N-palmitoyl cysteine attachment. A lipid anchor (S-diacylglycerol cysteine) is attached at cysteine 26.

It belongs to the LolB family. Monomer.

The protein resides in the cell outer membrane. Functionally, plays a critical role in the incorporation of lipoproteins in the outer membrane after they are released by the LolA protein. This chain is Outer-membrane lipoprotein LolB, found in Shewanella sp. (strain MR-4).